The chain runs to 404 residues: Formate-dependent phosphoribosylglycinamide formyltransferase (404 aa).

N(1)-(5-phospho-beta-D-ribosyl)glycinamide contacts are provided by residues 25-26 (EL) and Glu-85. ATP-binding positions include Arg-118, Lys-159, 164–169 (SSGKGQ), 199–202 (EGFV), and Glu-207. In terms of domain architecture, ATP-grasp spans 123-318 (RLAAEELGLP…EFELHARAIL (196 aa)). Mg(2+) is bound by residues Glu-277 and Glu-289. Residues Asp-296, Lys-365, and 372–373 (RR) each bind N(1)-(5-phospho-beta-D-ribosyl)glycinamide.

It belongs to the PurK/PurT family. In terms of assembly, homodimer.

The enzyme catalyses N(1)-(5-phospho-beta-D-ribosyl)glycinamide + formate + ATP = N(2)-formyl-N(1)-(5-phospho-beta-D-ribosyl)glycinamide + ADP + phosphate + H(+). It participates in purine metabolism; IMP biosynthesis via de novo pathway; N(2)-formyl-N(1)-(5-phospho-D-ribosyl)glycinamide from N(1)-(5-phospho-D-ribosyl)glycinamide (formate route): step 1/1. Its function is as follows. Involved in the de novo purine biosynthesis. Catalyzes the transfer of formate to 5-phospho-ribosyl-glycinamide (GAR), producing 5-phospho-ribosyl-N-formylglycinamide (FGAR). Formate is provided by PurU via hydrolysis of 10-formyl-tetrahydrofolate. The sequence is that of Formate-dependent phosphoribosylglycinamide formyltransferase from Burkholderia cenocepacia (strain HI2424).